The chain runs to 281 residues: MTDRYAVFGHPVAHSKSPQIHATFGRQEGIAVDYRAIDLAPEAFLAGLEAFAADGGVGANVTSPHKEAAFSVCTTLTARARRAGSVNTLLRKGDRWHGDTTDGIGLVRDLTDRHGLDLRGRRMLLIGAGGSARSVAPALLDAGITELVVVNRTPERADELIDAMGEPGRAISRYWEDLRDLGDFELIVNATSAGRDRDIEFKLPLSLVNSMTTAVDLNYGEAAIAFLAWARAAECRNTVDGLGMLVEQAAESFLQWHGVRPQTDEVYQSLRQGSAVLAGED.

Shikimate-binding positions include 15–17 (SKS) and Thr62. Lys66 (proton acceptor) is an active-site residue. Residues Asn87 and Asp102 each contribute to the shikimate site. NADP(+) contacts are provided by residues 127–131 (GAGGS), 151–156 (NRTPER), and Leu217. A shikimate-binding site is contributed by Tyr219. Gly241 is an NADP(+) binding site.

This sequence belongs to the shikimate dehydrogenase family. Homodimer.

It carries out the reaction shikimate + NADP(+) = 3-dehydroshikimate + NADPH + H(+). It functions in the pathway metabolic intermediate biosynthesis; chorismate biosynthesis; chorismate from D-erythrose 4-phosphate and phosphoenolpyruvate: step 4/7. Functionally, involved in the biosynthesis of the chorismate, which leads to the biosynthesis of aromatic amino acids. Catalyzes the reversible NADPH linked reduction of 3-dehydroshikimate (DHSA) to yield shikimate (SA). This is Shikimate dehydrogenase (NADP(+)) from Stenotrophomonas maltophilia (strain K279a).